The sequence spans 254 residues: Imidazole glycerol phosphate synthase subunit HisF (254 aa).

Active-site residues include aspartate 11 and aspartate 130.

It belongs to the HisA/HisF family. In terms of assembly, heterodimer of HisH and HisF.

Its subcellular location is the cytoplasm. The catalysed reaction is 5-[(5-phospho-1-deoxy-D-ribulos-1-ylimino)methylamino]-1-(5-phospho-beta-D-ribosyl)imidazole-4-carboxamide + L-glutamine = D-erythro-1-(imidazol-4-yl)glycerol 3-phosphate + 5-amino-1-(5-phospho-beta-D-ribosyl)imidazole-4-carboxamide + L-glutamate + H(+). It participates in amino-acid biosynthesis; L-histidine biosynthesis; L-histidine from 5-phospho-alpha-D-ribose 1-diphosphate: step 5/9. IGPS catalyzes the conversion of PRFAR and glutamine to IGP, AICAR and glutamate. The HisF subunit catalyzes the cyclization activity that produces IGP and AICAR from PRFAR using the ammonia provided by the HisH subunit. In Chromobacterium violaceum (strain ATCC 12472 / DSM 30191 / JCM 1249 / CCUG 213 / NBRC 12614 / NCIMB 9131 / NCTC 9757 / MK), this protein is Imidazole glycerol phosphate synthase subunit HisF.